Reading from the N-terminus, the 232-residue chain is MSAPTFRLCPADIGLEVAFAGRSNAGKSSAINALTNQRQLARSSKTPGRTQMINFFNVGDADRRLVDLPGYGYAAVPLEMKKEWQVELEEYLVSRSSLAGLVLMTDIRHPLKFFDEQMLRWAKDGELPVHILLTKADKLKYGASKNALLNTRKRLKQLGLNCSIQLFSALRKEGLDELAGVMGNWYEYQLEANKIIESSFALLEGSELEDAIEKDAVQKDKNLKDSAQKESK.

Residues 13–188 enclose the EngB-type G domain; it reads IGLEVAFAGR…AGVMGNWYEY (176 aa). GTP contacts are provided by residues 21 to 28, 48 to 52, 67 to 70, 134 to 137, and 167 to 169; these read GRSNAGKS, GRTQM, DLPG, TKAD, and FSA. 2 residues coordinate Mg(2+): Ser-28 and Thr-50.

This sequence belongs to the TRAFAC class TrmE-Era-EngA-EngB-Septin-like GTPase superfamily. EngB GTPase family. Requires Mg(2+) as cofactor.

Necessary for normal cell division and for the maintenance of normal septation. The sequence is that of Probable GTP-binding protein EngB from Psychrobacter arcticus (strain DSM 17307 / VKM B-2377 / 273-4).